Consider the following 459-residue polypeptide: ATP-dependent protease ATPase subunit HslU (459 aa).

Residues Val18, 60–65, Asp272, Glu337, and Arg409 contribute to the ATP site; that span reads GVGKTE.

It belongs to the ClpX chaperone family. HslU subfamily. A double ring-shaped homohexamer of HslV is capped on each side by a ring-shaped HslU homohexamer. The assembly of the HslU/HslV complex is dependent on binding of ATP.

The protein resides in the cytoplasm. Functionally, ATPase subunit of a proteasome-like degradation complex; this subunit has chaperone activity. The binding of ATP and its subsequent hydrolysis by HslU are essential for unfolding of protein substrates subsequently hydrolyzed by HslV. HslU recognizes the N-terminal part of its protein substrates and unfolds these before they are guided to HslV for hydrolysis. This is ATP-dependent protease ATPase subunit HslU from Thermoanaerobacter sp. (strain X514).